The primary structure comprises 321 residues: Ornithine carbamoyltransferase (321 aa).

Carbamoyl phosphate contacts are provided by residues 53 to 56 (STRT), Gln-80, Arg-104, and 131 to 134 (HPCQ). L-ornithine contacts are provided by residues Asn-166, Asp-230, and 234–235 (SM). Residues 270–271 (CL) and Arg-298 each bind carbamoyl phosphate.

The protein belongs to the aspartate/ornithine carbamoyltransferase superfamily. OTCase family.

Its subcellular location is the cytoplasm. It carries out the reaction carbamoyl phosphate + L-ornithine = L-citrulline + phosphate + H(+). Its pathway is amino-acid degradation; L-arginine degradation via ADI pathway; carbamoyl phosphate from L-arginine: step 2/2. Reversibly catalyzes the transfer of the carbamoyl group from carbamoyl phosphate (CP) to the N(epsilon) atom of ornithine (ORN) to produce L-citrulline. The polypeptide is Ornithine carbamoyltransferase (Bifidobacterium longum subsp. infantis (strain ATCC 15697 / DSM 20088 / JCM 1222 / NCTC 11817 / S12)).